Here is a 463-residue protein sequence, read N- to C-terminus: MYGNYSHFMKFPTGFGGSPGHSGSTSMSPSAALSTGKPMDSHPSYTDTPVSAPRTLSAVGTPLNALGSPYRVITSTMGPPSGTLAAPPGINLVAPPSSQLNVVNSVSISEDIKPLPGLPGIGNMNYPSTSPGSLVKHICAICGDRSSGKHYGVYSCEGCKGFFKRTIRKDLIYTCRDNKDCLIDKRQRNRCQYCRYQKCLVMGMKREAVQEERQRSRERAESEAECASSGHEDMPVERILEAELAVEPKTESYGDMNMENSTNDPVTNICHAADKQLFTLVEWAKRIPHFSDLTLEDQVILLRAGWNELLIASFSHRSVSVQDGILLATGLHVHRSSAHSAGVGSIFDRVLTELVSKMKDMQMDKSELGCLRAIVLFNPDAKGLSNPSEVETLREKVYATLEAYTKQKYPEQPGRFAKLLLRLPALRSIGLKCLEHLFFFKLIGDTPIDTFLMEMLETPLQIT.

The tract at residues 1-138 is modulating; sequence MYGNYSHFMK…TSPGSLVKHI (138 aa). The segment at 17–53 is disordered; it reads GSPGHSGSTSMSPSAALSTGKPMDSHPSYTDTPVSAP. The span at 21–33 shows a compositional bias: polar residues; that stretch reads HSGSTSMSPSAAL. NR C4-type zinc fingers lie at residues 139-159 and 175-199; these read CAICGDRSSGKHYGVYSCEGC and CRDNKDCLIDKRQRNRCQYCRYQKC. Residues 139–204 constitute a DNA-binding region (nuclear receptor); it reads CAICGDRSSG…RYQKCLVMGM (66 aa). The hinge stretch occupies residues 205–230; sequence KREAVQEERQRSRERAESEAECASSG. Residues 211–222 are compositionally biased toward basic and acidic residues; sequence EERQRSRERAES. Positions 211 to 232 are disordered; the sequence is EERQRSRERAESEAECASSGHE. The region spanning 231-459 is the NR LBD domain; it reads HEDMPVERIL…TFLMEMLETP (229 aa).

The protein belongs to the nuclear hormone receptor family. NR2 subfamily. Homodimer. Heterodimer with a RAR molecule. Binds DNA preferentially as a RAR/RXR heterodimer. Interacts with RARA. Acetylated by EP300.

It localises to the nucleus. The protein resides in the cytoplasm. In terms of biological role, receptor for retinoic acid. Retinoic acid receptors bind as heterodimers to their target response elements in response to their ligands, all-trans or 9-cis retinoic acid, and regulate gene expression in various biological processes. The RAR/RXR heterodimers bind to the retinoic acid response elements (RARE) composed of tandem 5'-AGGTCA-3' sites known as DR1-DR5. The high affinity ligand for RXRs is 9-cis retinoic acid. In Sus scrofa (Pig), this protein is Retinoic acid receptor RXR-gamma (RXRG).